The primary structure comprises 91 residues: Small ribosomal subunit protein uS19 (91 aa).

It belongs to the universal ribosomal protein uS19 family.

Its function is as follows. Protein S19 forms a complex with S13 that binds strongly to the 16S ribosomal RNA. This chain is Small ribosomal subunit protein uS19, found in Hahella chejuensis (strain KCTC 2396).